Consider the following 162-residue polypeptide: Zinc finger protein ZAT12 (162 aa).

2 consecutive C2H2-type zinc fingers follow at residues 39-61 (FTCK…RASH) and 82-104 (HPCP…MRRH).

Expressed in roots, stems and flowers.

Its subcellular location is the nucleus. In terms of biological role, transcriptional repressor involved in light acclimation, cold and oxidative stress responses. May regulate a collection of transcripts involved in response to high-light, cold and oxidative stress. This is Zinc finger protein ZAT12 (ZAT12) from Arabidopsis thaliana (Mouse-ear cress).